The chain runs to 624 residues: Prickle planar cell polarity protein 3 (624 aa).

A compositionally biased stretch (basic residues) spans 1 to 12 (MFARGSRRRRSG). A disordered region spans residues 1 to 26 (MFARGSRRRRSGRAPPEAEDPARGQP). In terms of domain architecture, PET spans 74-182 (SDFQRHSISD…TVRIFPVTIT (109 aa)). LIM zinc-binding domains are found at residues 184-249 (AICE…CLRP), 250-309 (RCQA…RHAE), and 310-373 (YCDG…SETT). The segment at 371-617 (ETTAPGPGRR…SHPVMPRQTR (247 aa)) is disordered. Over residues 383–409 (SAGTVTTPLTTSTASFSATEGTSETAS) the composition is skewed to low complexity. Residues 447 to 458 (PEPPTESPGHPA) are compositionally biased toward pro residues. Residues S475 and S491 each carry the phosphoserine modification. Basic residues predominate over residues 509–541 (SCHHHHHHRRRRQRHRRRGSHHHHHHPGRHGHH). Over residues 545-564 (LGSGSDSGSCSSSPSSPSSE) the composition is skewed to low complexity. Residues 587-601 (RTTQDTSTETFNSPA) show a composition bias toward polar residues.

It belongs to the prickle / espinas / testin family. In terms of assembly, interacts with VANGL2 via its C-terminus. The VANGL2-dependent membrane recruitment of PRICKLE3 is a prerequisite for its polarization. Interacts with WTIP. WTIP is involved in the recruitment of PRICKLE3 to the basal body. Interacts with MT-ATP8, a component of the mitochondrial complex V. In terms of tissue distribution, widely expressed.

It localises to the cytoplasm. Its subcellular location is the cell membrane. The protein resides in the mitochondrion. In terms of biological role, involved in the planar cell polarity (PCP) pathway that is essential for the polarization of epithelial cells during morphogenetic processes, including gastrulation and neurulation. PCP is maintained by two molecular modules, the global and the core modules, PRICKLE3 being part of the core module. Distinct complexes of the core module segregate to opposite sides of the cell, where they interact with the opposite complex in the neighboring cell at or near the adherents junctions. Involved in the organization of the basal body. Involved in cilia growth and positioning. Required for proper assembly, stability, and function of mitochondrial membrane ATP synthase (mitochondrial complex V). The sequence is that of Prickle planar cell polarity protein 3 from Mus musculus (Mouse).